We begin with the raw amino-acid sequence, 812 residues long: Mitochondrial intermediate peptidase (812 aa).

A mitochondrion-targeting transit peptide spans 1–35; that stretch reads MLKLLRPRPWVCNSCLNRVAFPKPYPVGSRSTRWL. The tract at residues 518-544 is disordered; sequence STSEGGPAFGSPESAANDGMAASRGAS. Residue histidine 587 coordinates Zn(2+). Glutamate 588 is an active-site residue. Histidine 591 and histidine 594 together coordinate Zn(2+).

The protein belongs to the peptidase M3 family. Requires Zn(2+) as cofactor.

The protein resides in the mitochondrion matrix. It carries out the reaction Release of an N-terminal octapeptide as second stage of processing of some proteins imported into the mitochondrion.. In terms of biological role, cleaves proteins, imported into the mitochondrion, to their mature size. While most mitochondrial precursor proteins are processed to the mature form in one step by mitochondrial processing peptidase (MPP), the sequential cleavage by MIP of an octapeptide after initial processing by MPP is a required step for a subgroup of nuclear-encoded precursor proteins destined for the matrix or the inner membrane. The protein is Mitochondrial intermediate peptidase (OCT1) of Pyricularia oryzae (strain 70-15 / ATCC MYA-4617 / FGSC 8958) (Rice blast fungus).